A 247-amino-acid chain; its full sequence is Chaperone protein NfaE (247 aa).

Positions 1 to 29 are cleaved as a signal peptide; sequence MKMRAVAVFTGMLTGVLSVTGLLSAGAYA. Residues 106-125 are disordered; the sequence is GQQSSRRRSVSTGGEFPSDR.

The protein belongs to the periplasmic pilus chaperone family.

It localises to the periplasm. Functionally, involved in the biogenesis of the NFA-I adhesin. This Escherichia coli protein is Chaperone protein NfaE (nfaE).